The following is a 311-amino-acid chain: 4-hydroxy-3-methylbut-2-enyl diphosphate reductase (311 aa).

Cys-12 lines the [4Fe-4S] cluster pocket. 2 residues coordinate (2E)-4-hydroxy-3-methylbut-2-enyl diphosphate: His-41 and His-74. Dimethylallyl diphosphate contacts are provided by His-41 and His-74. Isopentenyl diphosphate-binding residues include His-41 and His-74. Cys-96 is a [4Fe-4S] cluster binding site. Residue His-124 coordinates (2E)-4-hydroxy-3-methylbut-2-enyl diphosphate. His-124 is a binding site for dimethylallyl diphosphate. Position 124 (His-124) interacts with isopentenyl diphosphate. The active-site Proton donor is Glu-126. Thr-168 contacts (2E)-4-hydroxy-3-methylbut-2-enyl diphosphate. Cys-198 lines the [4Fe-4S] cluster pocket. (2E)-4-hydroxy-3-methylbut-2-enyl diphosphate is bound by residues Ser-226, Ser-227, Asn-228, and Ser-270. Dimethylallyl diphosphate contacts are provided by Ser-226, Ser-227, Asn-228, and Ser-270. Residues Ser-226, Ser-227, Asn-228, and Ser-270 each coordinate isopentenyl diphosphate.

The protein belongs to the IspH family. Requires [4Fe-4S] cluster as cofactor.

The catalysed reaction is isopentenyl diphosphate + 2 oxidized [2Fe-2S]-[ferredoxin] + H2O = (2E)-4-hydroxy-3-methylbut-2-enyl diphosphate + 2 reduced [2Fe-2S]-[ferredoxin] + 2 H(+). The enzyme catalyses dimethylallyl diphosphate + 2 oxidized [2Fe-2S]-[ferredoxin] + H2O = (2E)-4-hydroxy-3-methylbut-2-enyl diphosphate + 2 reduced [2Fe-2S]-[ferredoxin] + 2 H(+). The protein operates within isoprenoid biosynthesis; dimethylallyl diphosphate biosynthesis; dimethylallyl diphosphate from (2E)-4-hydroxy-3-methylbutenyl diphosphate: step 1/1. It participates in isoprenoid biosynthesis; isopentenyl diphosphate biosynthesis via DXP pathway; isopentenyl diphosphate from 1-deoxy-D-xylulose 5-phosphate: step 6/6. Its function is as follows. Catalyzes the conversion of 1-hydroxy-2-methyl-2-(E)-butenyl 4-diphosphate (HMBPP) into a mixture of isopentenyl diphosphate (IPP) and dimethylallyl diphosphate (DMAPP). Acts in the terminal step of the DOXP/MEP pathway for isoprenoid precursor biosynthesis. The protein is 4-hydroxy-3-methylbut-2-enyl diphosphate reductase of Alcanivorax borkumensis (strain ATCC 700651 / DSM 11573 / NCIMB 13689 / SK2).